Here is a 486-residue protein sequence, read N- to C-terminus: N-succinylglutamate 5-semialdehyde dehydrogenase (486 aa).

221 to 226 is an NAD(+) binding site; the sequence is GSSATG. Catalysis depends on residues Glu244 and Cys278.

Belongs to the aldehyde dehydrogenase family. AstD subfamily.

It catalyses the reaction N-succinyl-L-glutamate 5-semialdehyde + NAD(+) + H2O = N-succinyl-L-glutamate + NADH + 2 H(+). Its pathway is amino-acid degradation; L-arginine degradation via AST pathway; L-glutamate and succinate from L-arginine: step 4/5. In terms of biological role, catalyzes the NAD-dependent reduction of succinylglutamate semialdehyde into succinylglutamate. This Chromobacterium violaceum (strain ATCC 12472 / DSM 30191 / JCM 1249 / CCUG 213 / NBRC 12614 / NCIMB 9131 / NCTC 9757 / MK) protein is N-succinylglutamate 5-semialdehyde dehydrogenase.